We begin with the raw amino-acid sequence, 123 residues long: Histone H2B (123 aa).

The interval 1–31 (MPPKTSGKAAKKAGKAQKNITKNDKKKKRKR) is disordered. Pro-2 carries the N-methylproline; partial modification. At Lys-44 the chain carries N6-succinyllysine. Ser-110 is a glycosylation site (O-linked (GlcNAc) serine). An N6-succinyllysine mark is found at Lys-114 and Lys-118. Residue Lys-118 forms a Glycyl lysine isopeptide (Lys-Gly) (interchain with G-Cter in ubiquitin) linkage.

This sequence belongs to the histone H2B family. In terms of assembly, the nucleosome is a histone octamer containing two molecules each of H2A, H2B, H3 and H4 assembled in one H3-H4 heterotetramer and two H2A-H2B heterodimers. The octamer wraps approximately 147 bp of DNA. Post-translationally, phosphorylated by the catalytic component of the Dbf4-dependent kinase (DDK) complex Cdc7. In terms of processing, monoubiquitination of Lys-118 by Bre1 gives a specific tag for epigenetic transcriptional activation and is also prerequisite for histone H3 'Lys-4' and 'Lys-79' methylation. Deubiquitination of Lys-118 by the SAGA complex is involved in activating transcription of a large subset of genes. Methylation at Pro-2 increases upon heat shock. Post-translationally, glcNAcylation at Ser-110 promotes monoubiquitination of Lys-118. It fluctuates in response to extracellular glucose, and associates with transcribed genes.

Its subcellular location is the nucleus. The protein resides in the chromosome. Functionally, core component of nucleosome. Nucleosomes wrap and compact DNA into chromatin, limiting DNA accessibility to the cellular machineries which require DNA as a template. Histones thereby play a central role in transcription regulation, DNA repair, DNA replication and chromosomal stability. DNA accessibility is regulated via a complex set of post-translational modifications of histones, also called histone code, and nucleosome remodeling. The protein is Histone H2B (His2B) of Drosophila sechellia (Fruit fly).